The following is a 497-amino-acid chain: Lysine--tRNA ligase (497 aa).

E405 and E412 together coordinate Mg(2+).

It belongs to the class-II aminoacyl-tRNA synthetase family. Homodimer. Mg(2+) serves as cofactor.

The protein localises to the cytoplasm. It catalyses the reaction tRNA(Lys) + L-lysine + ATP = L-lysyl-tRNA(Lys) + AMP + diphosphate. In Gloeobacter violaceus (strain ATCC 29082 / PCC 7421), this protein is Lysine--tRNA ligase.